The sequence spans 75 residues: MKNTIKKGNQVLVLSGNSKGQIGEVLVIDRKRKQLVVKGINQKTKHMKPKRQGEVGQIIRREYPIHMSQVRLWNG.

This sequence belongs to the universal ribosomal protein uL24 family. As to quaternary structure, part of the 50S ribosomal subunit.

The protein localises to the plastid. The protein resides in the chloroplast. One of two assembly initiator proteins, it binds directly to the 5'-end of the 23S rRNA, where it nucleates assembly of the 50S subunit. In Cyanidioschyzon merolae (strain NIES-3377 / 10D) (Unicellular red alga), this protein is Large ribosomal subunit protein uL24c (rpl24).